A 141-amino-acid chain; its full sequence is MAKKVVGMIKLQLPAGKATPAPPVGPALGQHGVNIMGFCKEFNAKTVKQEGLIIPVVITVYQDRSFSFVLKTPPAAVLLKKAAGIESGSGVPNKTKVAKVTEEQVKQIAETKMVDLNASSVETAMKMIAGTARSMGITIEG.

It belongs to the universal ribosomal protein uL11 family. As to quaternary structure, part of the ribosomal stalk of the 50S ribosomal subunit. Interacts with L10 and the large rRNA to form the base of the stalk. L10 forms an elongated spine to which L12 dimers bind in a sequential fashion forming a multimeric L10(L12)X complex. One or more lysine residues are methylated.

Functionally, forms part of the ribosomal stalk which helps the ribosome interact with GTP-bound translation factors. This Clostridium kluyveri (strain ATCC 8527 / DSM 555 / NBRC 12016 / NCIMB 10680 / K1) protein is Large ribosomal subunit protein uL11.